Consider the following 360-residue polypeptide: DNA replication and repair protein RecF (360 aa).

30-37 (GHNGSGKT) is a binding site for ATP.

The protein belongs to the RecF family.

It localises to the cytoplasm. In terms of biological role, the RecF protein is involved in DNA metabolism; it is required for DNA replication and normal SOS inducibility. RecF binds preferentially to single-stranded, linear DNA. It also seems to bind ATP. The sequence is that of DNA replication and repair protein RecF from Haemophilus ducreyi (strain 35000HP / ATCC 700724).